The chain runs to 508 residues: Flagellin (508 aa).

This sequence belongs to the bacterial flagellin family.

Its subcellular location is the secreted. The protein resides in the bacterial flagellum. In terms of biological role, flagellin is the subunit protein which polymerizes to form the filaments of bacterial flagella. This is Flagellin (fliC) from Salmonella berta.